The following is a 511-amino-acid chain: Aminotransferase FGSG_17085 (511 aa).

165-166 (GA) provides a ligand contact to pyridoxal 5'-phosphate. Y200 provides a ligand contact to substrate. D310 contacts pyridoxal 5'-phosphate. K339 carries the N6-(pyridoxal phosphate)lysine modification. Substrate is bound at residue G371. Residue 372-373 (HT) coordinates pyridoxal 5'-phosphate.

The protein belongs to the class-III pyridoxal-phosphate-dependent aminotransferase family. Requires pyridoxal 5'-phosphate as cofactor.

It functions in the pathway secondary metabolite biosynthesis. Aminotransferase; part of the gene cluster that mediates the biosynthesis of the lipopeptide fusaristatin A. Fusaristatin A consists of a polyketide chain linked to three amino acid residues glutamine (Gln), dehydroalanine (dehydro-Ala), and beta-aminoisobutyric acid. The biosynthesis starts with formation of a linear polyketide chain by the highly reducing polyketide synthase PKS6. The gene cluster does not contain an acyl-CoA ligase or an acyl-transferase, and it is therefore predicted that the polyketide is transferred directly to the nonribosomal peptide synthetase NRPS7. Modules 1-3 from NRPS7 incorporate dehydro-Ala, Gln, and beta-aminoisobutyric acid in the compound, which is released by cyclization. The beta-aminoisobutyric acid units are most likely not freely available to the NRPS, but can be synthesized from thymine, which requires a dehydrogenase, a monooxygenase, and an aminotransferase. The fusaristatin A cluster contains a cytochrome P450 monooxygenase (FGSG_08207) and an aminotransferase (FGSG_17085), which theoretically can perform two of the enzymatic steps. The enzymes may however also be involved in biosynthesis of dehydroalanine or modification of the polyketide. The dehydro-Ala residue can be a result of cyclization, where serine is dehydrated. The last gene of the cluster encodes a protein with an A/B barrel domain found in variable enzymes, which hampers functional prediction. This chain is Aminotransferase FGSG_17085, found in Gibberella zeae (strain ATCC MYA-4620 / CBS 123657 / FGSC 9075 / NRRL 31084 / PH-1) (Wheat head blight fungus).